The chain runs to 338 residues: UDP-3-O-acylglucosamine N-acyltransferase (338 aa).

The active-site Proton acceptor is the His239.

It belongs to the transferase hexapeptide repeat family. LpxD subfamily. As to quaternary structure, homotrimer.

It catalyses the reaction a UDP-3-O-[(3R)-3-hydroxyacyl]-alpha-D-glucosamine + a (3R)-hydroxyacyl-[ACP] = a UDP-2-N,3-O-bis[(3R)-3-hydroxyacyl]-alpha-D-glucosamine + holo-[ACP] + H(+). The protein operates within bacterial outer membrane biogenesis; LPS lipid A biosynthesis. Functionally, catalyzes the N-acylation of UDP-3-O-acylglucosamine using 3-hydroxyacyl-ACP as the acyl donor. Is involved in the biosynthesis of lipid A, a phosphorylated glycolipid that anchors the lipopolysaccharide to the outer membrane of the cell. In Xylella fastidiosa (strain M23), this protein is UDP-3-O-acylglucosamine N-acyltransferase.